Reading from the N-terminus, the 225-residue chain is Cbp/p300-interacting transactivator 2 (225 aa).

This sequence belongs to the CITED family.

It localises to the nucleus. Functionally, transcriptional coactivator or corepressor of the p300/CBP-mediated transcription complex. May be involved in sex determination, early gonad development, left-right patterning during embryogenesis and differentiation of the adrenal cortex. The sequence is that of Cbp/p300-interacting transactivator 2 (cited2) from Xenopus laevis (African clawed frog).